A 557-amino-acid chain; its full sequence is Calcium-dependent protein kinase 4 (557 aa).

A disordered region spans residues 1 to 72 (MGNTCRGSIG…LVSPRKASMN (72 aa)). Gly-2 is lipidated: N-myristoyl glycine. Residues 15–27 (QGYTQPEDSSCST) are compositionally biased toward polar residues. Residues 28–48 (NHNPSSGNSYSSSDNFSPTSN) show a composition bias toward low complexity. Residues 94-352 (YTLGRKLGQG…AHEVLCHPWI (259 aa)) enclose the Protein kinase domain. Residues 100 to 108 (LGQGQFGTT) and Lys-123 each bind ATP. Asp-218 serves as the catalytic Proton acceptor. The interval 358 to 388 (APDRALDPAVLSRLKQFSAMNKLKKMALRVI) is autoinhibitory domain. EF-hand domains are found at residues 395–430 (EEIA…YGST), 431–466 (LKDT…LNKL), 467–502 (EREE…HNMT), and 506–536 (FEDI…GNPC). Residues Asp-408, Asp-410, Ser-412, Glu-419, Asp-444, Asp-446, Ser-448, Thr-450, Glu-455, Asp-480, Asp-482, Ser-484, Tyr-486, Glu-491, Asp-514, Asp-516, Asp-518, Arg-520, and Glu-525 each coordinate Ca(2+).

It belongs to the protein kinase superfamily. Ser/Thr protein kinase family. CDPK subfamily.

It localises to the membrane. It carries out the reaction L-seryl-[protein] + ATP = O-phospho-L-seryl-[protein] + ADP + H(+). The catalysed reaction is L-threonyl-[protein] + ATP = O-phospho-L-threonyl-[protein] + ADP + H(+). With respect to regulation, activated by calcium. Autophosphorylation may play an important role in the regulation of the kinase activity. Its function is as follows. Regulates the production of reactive oxygen species (ROS) by NADPH oxidase. This Solanum tuberosum (Potato) protein is Calcium-dependent protein kinase 4 (CPK4).